Reading from the N-terminus, the 258-residue chain is Large ribosomal subunit protein uL15c (258 aa).

The transit peptide at 1–65 (MSAASLIPVS…NVKSSGENVR (65 aa)) directs the protein to the chloroplast. The tract at residues 67–90 (RLDNLGPQPGSRKRPKRKGRGIAA) is disordered. Residues 77–86 (SRKRPKRKGR) are compositionally biased toward basic residues.

Belongs to the universal ribosomal protein uL15 family. Part of the 50S ribosomal subunit.

Its subcellular location is the plastid. The protein localises to the chloroplast. This Pisum sativum (Garden pea) protein is Large ribosomal subunit protein uL15c (RPL15).